The chain runs to 322 residues: Ornithine carbamoyltransferase (322 aa).

Carbamoyl phosphate-binding positions include 67-70, glutamine 94, arginine 118, and 145-148; these read STRT and HPCQ. L-ornithine is bound by residues asparagine 176, aspartate 240, and 244-245; that span reads SM. Carbamoyl phosphate is bound by residues 280-281 and arginine 308; that span reads CL.

This sequence belongs to the aspartate/ornithine carbamoyltransferase superfamily. OTCase family.

The protein localises to the cytoplasm. It carries out the reaction carbamoyl phosphate + L-ornithine = L-citrulline + phosphate + H(+). It functions in the pathway amino-acid biosynthesis; L-arginine biosynthesis; L-arginine from L-ornithine and carbamoyl phosphate: step 1/3. Reversibly catalyzes the transfer of the carbamoyl group from carbamoyl phosphate (CP) to the N(epsilon) atom of ornithine (ORN) to produce L-citrulline. This is Ornithine carbamoyltransferase from Oceanobacillus iheyensis (strain DSM 14371 / CIP 107618 / JCM 11309 / KCTC 3954 / HTE831).